Here is a 330-residue protein sequence, read N- to C-terminus: Phenylalanine--tRNA ligase alpha subunit (330 aa).

E254 lines the Mg(2+) pocket.

The protein belongs to the class-II aminoacyl-tRNA synthetase family. Phe-tRNA synthetase alpha subunit type 1 subfamily. Tetramer of two alpha and two beta subunits. It depends on Mg(2+) as a cofactor.

It localises to the cytoplasm. It catalyses the reaction tRNA(Phe) + L-phenylalanine + ATP = L-phenylalanyl-tRNA(Phe) + AMP + diphosphate + H(+). This Neisseria meningitidis serogroup B (strain ATCC BAA-335 / MC58) protein is Phenylalanine--tRNA ligase alpha subunit (pheS).